The primary structure comprises 588 residues: uncharacterized protein (588 aa).

The first 19 residues, 1–19, serve as a signal peptide directing secretion; sequence MRSTAYLTALLSFLGATHA. 2 N-linked (GlcNAc...) asparagine glycosylation sites follow: N45 and N104. Positions 118 to 303 constitute an FAD-binding PCMH-type domain; it reads GQGRIPLYSA…TSVTLRTFKD (186 aa). A Pros-8alpha-FAD histidine modification is found at H156. N-linked (GlcNAc...) asparagine glycosylation is found at N179, N312, N320, N351, N370, and N446.

It belongs to the oxygen-dependent FAD-linked oxidoreductase family. The cofactor is FAD.

The protein localises to the secreted. This is an uncharacterized protein from Arthroderma benhamiae (strain ATCC MYA-4681 / CBS 112371) (Trichophyton mentagrophytes).